The following is a 905-amino-acid chain: V-type proton ATPase 116 kDa subunit a 1 (905 aa).

The Cytoplasmic portion of the chain corresponds to 1–424 (MGDYVTPGEE…DAYGIATYRE (424 aa)). The chain crosses the membrane as a helical span at residues 425 to 443 (INPAPYTMISFPFLFAVMF). Residues 444 to 445 (GD) are Lumenal-facing. The chain crosses the membrane as a helical span at residues 446–462 (MGHGAIMLLAALFFILK). The Cytoplasmic segment spans residues 463–477 (EKQLEAARIKDEIFQ). A helical membrane pass occupies residues 478–507 (TFFGGRYVIFLMGAFSIYTGFMYNDVFSKS). Over 508–572 (INTFGSSWQN…EGNKLSFLNS (65 aa)) the chain is Lumenal. A helical transmembrane segment spans residues 573 to 592 (MKMKMSVLFGIAQMTFGVLL). Topologically, residues 593–610 (SYQNFIYFKSDLDIKYMF) are cytoplasmic. Residues 611-631 (IPQMIFLSSIFIYLCIQILSK) traverse the membrane as a helical segment. Residues 632-699 (WLFFGAVGGT…YPGQATIEII (68 aa)) are Lumenal-facing. Residues 700–719 (LVVLALVQVPIMLFAKPYFL) traverse the membrane as a helical segment. Residues 720 to 788 (YRRDKQQSRY…DVMVYQAIHT (69 aa)) are Cytoplasmic-facing. The chain crosses the membrane as a helical span at residues 789-813 (IEFVLGCVSHTASYLRLWALSLAHA). The Lumenal portion of the chain corresponds to 814-834 (QLSDVLWTMVFRNAFVLDGYT). The helical transmembrane segment at 835–873 (GAIATYILFFIFGSLSVFILVLMEGLSAFLHALRLHWVE) threads the bilayer. At 874 to 905 (FQSKFYGGLGYEFAPFSFEKILAEEREAEENL) the chain is on the cytoplasmic side.

It belongs to the V-ATPase 116 kDa subunit family. As to quaternary structure, V-ATPase is a heteromultimeric enzyme made up of two complexes: the ATP-hydrolytic V1 complex and the proton translocation V0 complex. The V1 complex consists of three catalytic AB heterodimers that form a heterohexamer, three peripheral stalks each consisting of EG heterodimers, one central rotor including subunits D and F, and the regulatory subunits C and H. The proton translocation complex V0 consists of the proton transport subunit a, a ring of proteolipid subunits c9c'', rotary subunit d, subunits e and f, and the accessory subunits vah-19/Ac45 and vah-20/PRR. Interacts with V-type proton ATPase subunit C vha-11. As to expression, ubiquitous expression in embryos. Expressed in gonads, intestine, neurons in the head and motoneurons in the ventral cord of larvae and adults. Expressed in the vulvae and spermathecal uterine valves. Weakly expressed in the pharynx. Specifically expressed in the nervous system.

Its subcellular location is the membrane. Subunit of the V0 complex of vacuolar(H+)-ATPase (V-ATPase), a multisubunit enzyme composed of a peripheral complex (V1) that hydrolyzes ATP and a membrane integral complex (V0) that translocates protons. V-ATPase is responsible for acidifying and maintaining the pH of intracellular compartments and in some cell types, is targeted to the plasma membrane, where it is responsible for acidifying the extracellular environment. Required for assembly and activity of the vacuolar ATPase. Regulates the size of gut granules during embryonic development. In neurons, required for necrotic cell death by promoting intracellular acidification. Required for cell death induced by hypoxia. Required for acidification of synaptic vesicles and the release of neurotransmitters from adult neurons. The sequence is that of V-type proton ATPase 116 kDa subunit a 1 from Caenorhabditis elegans.